The sequence spans 298 residues: Protein pxr1 (298 aa).

Basic residues predominate over residues 1 to 11 (MGLAAPRKRTK). The segment at 1–23 (MGLAAPRKRTKISHDPNNTNWAR) is disordered. The G-patch domain occupies 25–79 (TSGFGHKILSSQGWTPGSFLGARDAAHADMFTAASAGHIRVVVKDDTLGLGARAG). The tract at residues 145 to 274 (LPERESVQQS…RPLGRQIVRG (130 aa)) is disordered. The span at 151-164 (VQQSRAAVETSDSN) shows a compositional bias: polar residues. A compositionally biased stretch (basic residues) spans 199 to 222 (REKKEKKDKKEKKEKKDKKDKKRK). Polar residues predominate over residues 247 to 256 (GLESDSTSVS).

The protein belongs to the PINX1 family.

It is found in the nucleus. Its subcellular location is the nucleolus. Its function is as follows. Involved in rRNA-processing at A0, A1 and A2 sites and negatively regulates telomerase. This Aspergillus terreus (strain NIH 2624 / FGSC A1156) protein is Protein pxr1 (pxr1).